The primary structure comprises 372 residues: Steroid C26-monooxygenase (372 aa).

Cys314 is a heme binding site.

The protein belongs to the cytochrome P450 family. Heme is required as a cofactor.

The enzyme catalyses cholest-4-en-3-one + 6 reduced [2Fe-2S]-[ferredoxin] + 3 O2 + 5 H(+) = (25R)-3-oxocholest-4-en-26-oate + 6 oxidized [2Fe-2S]-[ferredoxin] + 4 H2O. The protein operates within steroid metabolism; cholesterol degradation. Involved in the utilization of cholesterol as the sole carbon and energy source by degrading the side chain during infection. Primarily catalyzes the sequential oxidation of the terminal methyl of cholest-4-en-3-one into (25R)-26-hydroxycholest-4-en-3-one (alcohol), (25R)-26-oxocholest-4-en-3-one (aldehyde), to finally yield the carboxylic acid (25R)-3-oxocholest-4-en-26-oate. Also able to sequentially oxidize cholesterol itself, not only cholest-4-en-3-one. This chain is Steroid C26-monooxygenase (cyp142), found in Mycobacterium tuberculosis (strain CDC 1551 / Oshkosh).